Reading from the N-terminus, the 192-residue chain is 3-hydroxyanthranilate 3,4-dioxygenase 1 (192 aa).

An O2-binding site is contributed by Arg-50. Fe cation is bound by residues His-54, Glu-60, and His-102. Glu-60 provides a ligand contact to substrate. Substrate-binding residues include Arg-106 and Glu-116. A divalent metal cation-binding residues include Cys-131, Cys-134, Cys-168, and Cys-171.

This sequence belongs to the 3-HAO family. Fe(2+) is required as a cofactor.

It is found in the cytoplasm. It carries out the reaction 3-hydroxyanthranilate + O2 = (2Z,4Z)-2-amino-3-carboxymuconate 6-semialdehyde. It participates in cofactor biosynthesis; NAD(+) biosynthesis; quinolinate from L-kynurenine: step 3/3. In terms of biological role, catalyzes the oxidative ring opening of 3-hydroxyanthranilate to 2-amino-3-carboxymuconate semialdehyde, which spontaneously cyclizes to quinolinate. This chain is 3-hydroxyanthranilate 3,4-dioxygenase 1 (bna1-1), found in Aspergillus oryzae (strain ATCC 42149 / RIB 40) (Yellow koji mold).